A 176-amino-acid chain; its full sequence is Large ribosomal subunit protein uL6 (176 aa).

The span at 151-169 (RPPEPYKGRGIKYTDEHIQ) shows a compositional bias: basic and acidic residues. Residues 151 to 176 (RPPEPYKGRGIKYTDEHIQRKAGKTK) are disordered.

It belongs to the universal ribosomal protein uL6 family. Part of the 50S ribosomal subunit.

This protein binds to the 23S rRNA, and is important in its secondary structure. It is located near the subunit interface in the base of the L7/L12 stalk, and near the tRNA binding site of the peptidyltransferase center. In Desulfosudis oleivorans (strain DSM 6200 / JCM 39069 / Hxd3) (Desulfococcus oleovorans), this protein is Large ribosomal subunit protein uL6.